The following is a 226-amino-acid chain: Cytochrome c oxidase subunit 2 (226 aa).

Residues 1 to 14 (MAYPLQLGLQDATS) lie on the Mitochondrial intermembrane side of the membrane. The helical transmembrane segment at 15–45 (PIMEELTSFHDHTLMIVFLISTLVLYIISLM) threads the bilayer. The Mitochondrial matrix portion of the chain corresponds to 46–59 (LTTKLTHTSTMDAQ). Residues 60 to 87 (EIETIWTILPAIILIMIALPSLRVLYMM) form a helical membrane-spanning segment. Topologically, residues 88–226 (DEINNPALTV…KYFEAWSASM (139 aa)) are mitochondrial intermembrane. 6 residues coordinate Cu cation: His-161, Cys-196, Glu-198, Cys-200, His-204, and Met-207. Glu-198 is a Mg(2+) binding site. At Tyr-218 the chain carries Phosphotyrosine.

Belongs to the cytochrome c oxidase subunit 2 family. As to quaternary structure, component of the cytochrome c oxidase (complex IV, CIV), a multisubunit enzyme composed of 14 subunits. The complex is composed of a catalytic core of 3 subunits MT-CO1, MT-CO2 and MT-CO3, encoded in the mitochondrial DNA, and 11 supernumerary subunits COX4I, COX5A, COX5B, COX6A, COX6B, COX6C, COX7A, COX7B, COX7C, COX8 and NDUFA4, which are encoded in the nuclear genome. The complex exists as a monomer or a dimer and forms supercomplexes (SCs) in the inner mitochondrial membrane with NADH-ubiquinone oxidoreductase (complex I, CI) and ubiquinol-cytochrome c oxidoreductase (cytochrome b-c1 complex, complex III, CIII), resulting in different assemblies (supercomplex SCI(1)III(2)IV(1) and megacomplex MCI(2)III(2)IV(2)). Found in a complex with TMEM177, COA6, COX18, COX20, SCO1 and SCO2. Interacts with TMEM177 in a COX20-dependent manner. Interacts with COX20. Interacts with COX16. Cu cation is required as a cofactor.

Its subcellular location is the mitochondrion inner membrane. It catalyses the reaction 4 Fe(II)-[cytochrome c] + O2 + 8 H(+)(in) = 4 Fe(III)-[cytochrome c] + 2 H2O + 4 H(+)(out). In terms of biological role, component of the cytochrome c oxidase, the last enzyme in the mitochondrial electron transport chain which drives oxidative phosphorylation. The respiratory chain contains 3 multisubunit complexes succinate dehydrogenase (complex II, CII), ubiquinol-cytochrome c oxidoreductase (cytochrome b-c1 complex, complex III, CIII) and cytochrome c oxidase (complex IV, CIV), that cooperate to transfer electrons derived from NADH and succinate to molecular oxygen, creating an electrochemical gradient over the inner membrane that drives transmembrane transport and the ATP synthase. Cytochrome c oxidase is the component of the respiratory chain that catalyzes the reduction of oxygen to water. Electrons originating from reduced cytochrome c in the intermembrane space (IMS) are transferred via the dinuclear copper A center (CU(A)) of subunit 2 and heme A of subunit 1 to the active site in subunit 1, a binuclear center (BNC) formed by heme A3 and copper B (CU(B)). The BNC reduces molecular oxygen to 2 water molecules using 4 electrons from cytochrome c in the IMS and 4 protons from the mitochondrial matrix. The chain is Cytochrome c oxidase subunit 2 (MT-CO2) from Perognathus flavus (Silky pocket mouse).